A 1449-amino-acid polypeptide reads, in one-letter code: Gag-Pol polyprotein (1449 aa).

Glycine 2 is lipidated: N-myristoyl glycine; by host. The Nuclear export signal signature appears at 16–22 (LEKIRLR). The short motif at 26-32 (KKRYQLK) is the Nuclear localization signal element. 2 consecutive CCHC-type zinc fingers follow at residues 392-409 (IKCW…QCRA) and 413-430 (QGCW…KCPE). The tract at residues 442 to 494 (GKEAPQFPHGPDASGADTNCSPRGSSCGSTEELHEDGQKAEGEQRETLQGGNG) is disordered. The span at 457–470 (ADTNCSPRGSSCGS) shows a compositional bias: polar residues. The segment covering 472–487 (EELHEDGQKAEGEQRE) has biased composition (basic and acidic residues). Residues 518 to 587 (VEVLLDTGAD…TPINIFGRNL (70 aa)) enclose the Peptidase A2 domain. The For protease activity; shared with dimeric partner role is filled by aspartate 523. Residues 641-831 (DGQLEEAPPT…PPFQWMGYEL (191 aa)) enclose the Reverse transcriptase domain. Positions 707, 782, and 783 each coordinate Mg(2+). The tract at residues 824–832 (FQWMGYELW) is RT 'primer grip'. The Tryptophan repeat motif motif lies at 994-1010 (WEQWWTDYWQVTWIPEW). Residues 1030–1153 (IQGAETFYVD…VDHLVSQGIR (124 aa)) enclose the RNase H type-1 domain. The Mg(2+) site is built by aspartate 1039, glutamate 1074, aspartate 1094, and aspartate 1145. The segment at 1159–1200 (EKIEPAQEEHEKYHSNVKELVFKFGLPRLVAKQIVDTCDKCH) adopts an Integrase-type zinc-finger fold. Residues histidine 1168, histidine 1172, cysteine 1196, and cysteine 1199 each contribute to the Zn(2+) site. An Integrase catalytic domain is found at 1210–1360 (VNAELGTWQM…TPAERLVNMI (151 aa)). Residues aspartate 1220 and aspartate 1272 each coordinate Mg(2+). Residues 1379-1426 (FRVYYREGRDQLWKGPGELLWKGEGAVILKVGTEIKVVPRRKAKIIKD) constitute a DNA-binding region (integrase-type).

As to quaternary structure, homotrimer. Interacts with gp41 (via C-terminus). Homodimer. The active site consists of two apposed aspartic acid residues. In terms of assembly, heterodimer of p66 RT and p51 RT (RT p66/p51). Heterodimerization of RT is essential for DNA polymerase activity. Despite the sequence identities, p66 RT and p51 RT have distinct folding. As to quaternary structure, homotetramer; may further associate as a homohexadecamer. The cofactor is Mg(2+). In terms of processing, specific enzymatic cleavages by the viral protease yield mature proteins. The protease is released by autocatalytic cleavage. The polyprotein is cleaved during and after budding, this process is termed maturation. Proteolytic cleavage of p66 RT removes the RNase H domain to yield the p51 RT subunit. Post-translationally, capsid protein p24 is phosphorylated.

It localises to the virion. The protein resides in the host nucleus. The protein localises to the host cytoplasm. It is found in the host cell membrane. The catalysed reaction is Specific for a P1 residue that is hydrophobic, and P1' variable, but often Pro.. The enzyme catalyses Endohydrolysis of RNA in RNA/DNA hybrids. Three different cleavage modes: 1. sequence-specific internal cleavage of RNA. Human immunodeficiency virus type 1 and Moloney murine leukemia virus enzymes prefer to cleave the RNA strand one nucleotide away from the RNA-DNA junction. 2. RNA 5'-end directed cleavage 13-19 nucleotides from the RNA end. 3. DNA 3'-end directed cleavage 15-20 nucleotides away from the primer terminus.. It carries out the reaction 3'-end directed exonucleolytic cleavage of viral RNA-DNA hybrid.. It catalyses the reaction DNA(n) + a 2'-deoxyribonucleoside 5'-triphosphate = DNA(n+1) + diphosphate. Its activity is regulated as follows. The viral protease is inhibited by many synthetic protease inhibitors (PIs), such as amprenavir, atazanavir, indinavir, loprinavir, nelfinavir, ritonavir and saquinavir. RT can be inhibited either by nucleoside RT inhibitors (NRTIs) or by non nucleoside RT inhibitors (NNRTIs). NRTIs act as chain terminators, whereas NNRTIs inhibit DNA polymerization by binding a small hydrophobic pocket near the RT active site and inducing an allosteric change in this region. Classical NRTIs are abacavir, adefovir (PMEA), didanosine (ddI), lamivudine (3TC), stavudine (d4T), tenofovir (PMPA), zalcitabine (ddC), and zidovudine (AZT). Classical NNRTIs are atevirdine (BHAP U-87201E), delavirdine, efavirenz (DMP-266), emivirine (I-EBU), and nevirapine (BI-RG-587). The tritherapies used as a basic effective treatment of AIDS associate two NRTIs and one NNRTI. Use of protease inhibitors in tritherapy regimens permit more ambitious therapeutic strategies. Functionally, gag-Pol polyprotein and Gag polyprotein may regulate their own translation, by the binding genomic RNA in the 5'-UTR. At low concentration, Gag-Pol and Gag would promote translation, whereas at high concentration, the polyproteins encapsidate genomic RNA and then shut off translation. Matrix protein p17 has two main functions: in infected cell, it targets Gag and Gag-pol polyproteins to the plasma membrane via a multipartite membrane-binding signal, that includes its myristointegration complex. The myristoylation signal and the NLS exert conflicting influences its subcellular localization. The key regulation of these motifs might be phosphorylation of a portion of MA molecules on the C-terminal tyrosine at the time of virus maturation, by virion-associated cellular tyrosine kinase. Implicated in the release from host cell mediated by Vpu. In terms of biological role, capsid protein p24 forms the conical core that encapsulates the genomic RNA-nucleocapsid complex in the virion. The core is constituted by capsid protein hexamer subunits. The core is disassembled soon after virion entry. Interaction with host PPIA/CYPA protects the virus from restriction by host TRIM5-alpha and from an unknown antiviral activity in host cells. This capsid restriction by TRIM5 is one of the factors which restricts SIV to the simian species. Its function is as follows. Nucleocapsid protein p7 encapsulates and protects viral dimeric unspliced (genomic) RNA. Binds these RNAs through its zinc fingers. Facilitates rearangement of nucleic acid secondary structure during retrotranscription of genomic RNA. This capability is referred to as nucleic acid chaperone activity. Functionally, the aspartyl protease mediates proteolytic cleavages of Gag and Gag-Pol polyproteins during or shortly after the release of the virion from the plasma membrane. Cleavages take place as an ordered, step-wise cascade to yield mature proteins. This process is called maturation. Displays maximal activity during the budding process just prior to particle release from the cell. Also cleaves Nef and Vif, probably concomitantly with viral structural proteins on maturation of virus particles. Hydrolyzes host EIF4GI and PABP1 in order to shut off the capped cellular mRNA translation. The resulting inhibition of cellular protein synthesis serves to ensure maximal viral gene expression and to evade host immune response. Reverse transcriptase/ribonuclease H (RT) is a multifunctional enzyme that converts the viral dimeric RNA genome into dsDNA in the cytoplasm, shortly after virus entry into the cell. This enzyme displays a DNA polymerase activity that can copy either DNA or RNA templates, and a ribonuclease H (RNase H) activity that cleaves the RNA strand of RNA-DNA heteroduplexes in a partially processive 3' to 5' endonucleasic mode. Conversion of viral genomic RNA into dsDNA requires many steps. A tRNA binds to the primer-binding site (PBS) situated at the 5'-end of the viral RNA. RT uses the 3' end of the tRNA primer to perform a short round of RNA-dependent minus-strand DNA synthesis. The reading proceeds through the U5 region and ends after the repeated (R) region which is present at both ends of viral RNA. The portion of the RNA-DNA heteroduplex is digested by the RNase H, resulting in a ssDNA product attached to the tRNA primer. This ssDNA/tRNA hybridizes with the identical R region situated at the 3' end of viral RNA. This template exchange, known as minus-strand DNA strong stop transfer, can be either intra- or intermolecular. RT uses the 3' end of this newly synthesized short ssDNA to perform the RNA-dependent minus-strand DNA synthesis of the whole template. RNase H digests the RNA template except for two polypurine tracts (PPTs) situated at the 5'-end and near the center of the genome. It is not clear if both polymerase and RNase H activities are simultaneous. RNase H can probably proceed both in a polymerase-dependent (RNA cut into small fragments by the same RT performing DNA synthesis) and a polymerase-independent mode (cleavage of remaining RNA fragments by free RTs). Secondly, RT performs DNA-directed plus-strand DNA synthesis using the PPTs that have not been removed by RNase H as primers. PPTs and tRNA primers are then removed by RNase H. The 3' and 5' ssDNA PBS regions hybridize to form a circular dsDNA intermediate. Strand displacement synthesis by RT to the PBS and PPT ends produces a blunt ended, linear dsDNA copy of the viral genome that includes long terminal repeats (LTRs) at both ends. In terms of biological role, integrase catalyzes viral DNA integration into the host chromosome, by performing a series of DNA cutting and joining reactions. This enzyme activity takes place after virion entry into a cell and reverse transcription of the RNA genome in dsDNA. The first step in the integration process is 3' processing. This step requires a complex comprising the viral genome, matrix protein, Vpr and integrase. This complex is called the pre-integration complex (PIC). The integrase protein removes 2 nucleotides from each 3' end of the viral DNA, leaving recessed CA OH's at the 3' ends. In the second step, the PIC enters cell nucleus. This process is mediated through integrase and Vpr proteins, and allows the virus to infect a non dividing cell. This ability to enter the nucleus is specific of lentiviruses, other retroviruses cannot and rely on cell division to access cell chromosomes. In the third step, termed strand transfer, the integrase protein joins the previously processed 3' ends to the 5' ends of strands of target cellular DNA at the site of integration. The 5'-ends are produced by integrase-catalyzed staggered cuts, 5 bp apart. A Y-shaped, gapped, recombination intermediate results, with the 5'-ends of the viral DNA strands and the 3' ends of target DNA strands remaining unjoined, flanking a gap of 5 bp. The last step is viral DNA integration into host chromosome. This involves host DNA repair synthesis in which the 5 bp gaps between the unjoined strands are filled in and then ligated. Since this process occurs at both cuts flanking the SIV genome, a 5 bp duplication of host DNA is produced at the ends of SIV integration. Alternatively, Integrase may catalyze the excision of viral DNA just after strand transfer, this is termed disintegration. This is Gag-Pol polyprotein (gag-pol) from Cercopithecidae (Old World monkeys).